The following is a 484-amino-acid chain: Putative cysteine ligase BshC (484 aa).

A coiled-coil region spans residues 372–435 (RAFRDRVEGL…AARDEVLARH (64 aa)).

This sequence belongs to the BshC family.

In Thermus thermophilus (strain ATCC 27634 / DSM 579 / HB8), this protein is Putative cysteine ligase BshC.